The chain runs to 378 residues: tRNA-specific 2-thiouridylase MnmA (378 aa).

Residues 9–16 (GVSGGVDS) and M35 each bind ATP. Positions 94-96 (NPD) are interaction with target base in tRNA. The active-site Nucleophile is C99. An intrachain disulfide couples C99 to C195. G123 contributes to the ATP binding site. The segment at 145–147 (KDQ) is interaction with tRNA. Residue C195 is the Cysteine persulfide intermediate of the active site. An interaction with tRNA region spans residues 307–308 (RY).

The protein belongs to the MnmA/TRMU family.

It is found in the cytoplasm. It carries out the reaction S-sulfanyl-L-cysteinyl-[protein] + uridine(34) in tRNA + AH2 + ATP = 2-thiouridine(34) in tRNA + L-cysteinyl-[protein] + A + AMP + diphosphate + H(+). Its function is as follows. Catalyzes the 2-thiolation of uridine at the wobble position (U34) of tRNA, leading to the formation of s(2)U34. This Xanthomonas campestris pv. campestris (strain 8004) protein is tRNA-specific 2-thiouridylase MnmA.